The sequence spans 182 residues: UPF0316 protein Sde_0566 (182 aa).

The next 3 helical transmembrane spans lie at 7 to 27 (VAPELLALLIFVSRVIDVSLG), 41 to 61 (LAAFIGFFEIMIWLVAAGQVF), and 67 to 87 (WYLALAYAGGFSMGNYVGMWI).

The protein belongs to the UPF0316 family.

Its subcellular location is the cell membrane. The protein is UPF0316 protein Sde_0566 of Saccharophagus degradans (strain 2-40 / ATCC 43961 / DSM 17024).